A 101-amino-acid chain; its full sequence is Putative UPF0377 protein YBL108W (101 aa).

It belongs to the UPF0377 family.

The sequence is that of Putative UPF0377 protein YBL108W from Saccharomyces cerevisiae (strain ATCC 204508 / S288c) (Baker's yeast).